Here is a 590-residue protein sequence, read N- to C-terminus: Arginine--tRNA ligase (590 aa).

A 'HIGH' region motif is present at residues 138–148; that stretch reads ANPTGPLHIGH.

Belongs to the class-I aminoacyl-tRNA synthetase family. As to quaternary structure, monomer.

It localises to the cytoplasm. The enzyme catalyses tRNA(Arg) + L-arginine + ATP = L-arginyl-tRNA(Arg) + AMP + diphosphate. This Orientia tsutsugamushi (strain Ikeda) (Rickettsia tsutsugamushi) protein is Arginine--tRNA ligase.